Consider the following 350-residue polypeptide: Methionine import ATP-binding protein MetN (350 aa).

The ABC transporter domain maps to 2-242 (IELKGISQHF…PRHDVTRALI (241 aa)). Residue 39–46 (GRSGAGKS) coordinates ATP.

The protein belongs to the ABC transporter superfamily. Methionine importer (TC 3.A.1.24) family. As to quaternary structure, the complex is composed of two ATP-binding proteins (MetN), two transmembrane proteins (MetI) and a solute-binding protein (MetQ).

The protein localises to the cell inner membrane. It carries out the reaction L-methionine(out) + ATP + H2O = L-methionine(in) + ADP + phosphate + H(+). The enzyme catalyses D-methionine(out) + ATP + H2O = D-methionine(in) + ADP + phosphate + H(+). Functionally, part of the ABC transporter complex MetNIQ involved in methionine import. Responsible for energy coupling to the transport system. This is Methionine import ATP-binding protein MetN from Ralstonia nicotianae (strain ATCC BAA-1114 / GMI1000) (Ralstonia solanacearum).